An 868-amino-acid polypeptide reads, in one-letter code: MSSPKQTPMIAQYLSIKAAHPETLLFFRMGDFYELFFDDAKQAAEALNIALTSRGKSEGEPIPMAGIPVHARQTYLNKLIEAGFKVAICEQMEPPGASKGPVRREVVRTVTPGTLTEESLLSPRENNYLVSYLPAAKRHPHALAALDLSTGEFFALTLEREDQVAAELSRLEPAELLIPDNWEPEPWLKGWKRCLSRRGSWSFDGKEGARVLLEHFQVTSLESFGVADSPPCLGVCGALLHYCRETQKEALSHITGLSRLHQQEGMVLDETCRRNLELNYNLKDGSRKSSLLGVMDRCITPMGSRLLAQWINRPLQSLDAIATRQESVSWLRENLVAYQDLRERLRMVHDLERFLSRIALRRASPRDLGGLRQTLQCLPQLYAILTPADGHSLAVPSLLRILADHFNGHEALTKQLEQQLADELPLNLKEGETIRLGFDQTLDTLRSLSRDGKSYLTKLEVEEREKTGIPSLKIKYHRSFGYSMEVTKTHLDKVPPRYIQRQTMTNGVRYVTEELKEYEEQLLTAEERMLEREQLLFEALAEQVARQAETLQASARAIATLDVLANFAHIAEERNYCRPLLHEGAVIEINQGRHPVVEQFSDTPFVANDIRLDNRQRTGLITGPNMAGKSTLMRQVALIVLLAHTGACVPAGSAKIGRVDRIFTRVGASDDLAGGRSTFMVEMTETAHILHHASERSLVILDEIGRGTSTYDGLSIAWAVAEHIHTQCQARTLFATHYHELTQLESQLDGVFNLTVEVKEWKDQILFLHTIVRGAADRSYGIHVAQLAGLPRAVTRRAREVLADLEEHAVHHPDSMGQGHAPASQPYQLTLFEDAPPSPALLELKRVDPDELTPKEALEALYRLKELL.

623-630 provides a ligand contact to ATP; it reads GPNMAGKS.

Belongs to the DNA mismatch repair MutS family.

This protein is involved in the repair of mismatches in DNA. It is possible that it carries out the mismatch recognition step. This protein has a weak ATPase activity. This chain is DNA mismatch repair protein MutS, found in Magnetococcus marinus (strain ATCC BAA-1437 / JCM 17883 / MC-1).